The primary structure comprises 279 residues: Pantothenate synthetase (279 aa).

26–33 (MGNLHEGH) provides a ligand contact to ATP. Catalysis depends on histidine 33, which acts as the Proton donor. Glutamine 57 contributes to the (R)-pantoate binding site. Residue glutamine 57 coordinates beta-alanine. 144–147 (GKKD) is an ATP binding site. A (R)-pantoate-binding site is contributed by glutamine 150. ATP contacts are provided by residues valine 173 and 181–184 (LSSR).

This sequence belongs to the pantothenate synthetase family. As to quaternary structure, homodimer.

Its subcellular location is the cytoplasm. The catalysed reaction is (R)-pantoate + beta-alanine + ATP = (R)-pantothenate + AMP + diphosphate + H(+). It participates in cofactor biosynthesis; (R)-pantothenate biosynthesis; (R)-pantothenate from (R)-pantoate and beta-alanine: step 1/1. In terms of biological role, catalyzes the condensation of pantoate with beta-alanine in an ATP-dependent reaction via a pantoyl-adenylate intermediate. The sequence is that of Pantothenate synthetase from Burkholderia cenocepacia (strain HI2424).